The chain runs to 405 residues: Imidazolonepropionase (405 aa).

The Fe(3+) site is built by His-70 and His-72. His-70 and His-72 together coordinate Zn(2+). Residues Arg-79, Tyr-142, and His-175 each coordinate 4-imidazolone-5-propanoate. Tyr-142 contributes to the N-formimidoyl-L-glutamate binding site. His-240 is a binding site for Fe(3+). His-240 lines the Zn(2+) pocket. Residue Gln-243 coordinates 4-imidazolone-5-propanoate. Residue Asp-315 coordinates Fe(3+). Asp-315 lines the Zn(2+) pocket. N-formimidoyl-L-glutamate-binding residues include Asn-317 and Gly-319. A 4-imidazolone-5-propanoate-binding site is contributed by Ser-320.

Belongs to the metallo-dependent hydrolases superfamily. HutI family. It depends on Zn(2+) as a cofactor. The cofactor is Fe(3+).

The protein localises to the cytoplasm. It carries out the reaction 4-imidazolone-5-propanoate + H2O = N-formimidoyl-L-glutamate. Its pathway is amino-acid degradation; L-histidine degradation into L-glutamate; N-formimidoyl-L-glutamate from L-histidine: step 3/3. In terms of biological role, catalyzes the hydrolytic cleavage of the carbon-nitrogen bond in imidazolone-5-propanoate to yield N-formimidoyl-L-glutamate. It is the third step in the universal histidine degradation pathway. This Ruegeria sp. (strain TM1040) (Silicibacter sp.) protein is Imidazolonepropionase.